The chain runs to 375 residues: E3 ubiquitin-protein ligase FANCL (375 aa).

Residue Ala2 is modified to N-acetylalanine. Positions 104–294 are UBC-RWD region (URD); sequence LPPPPQFYSS…KDVLEIDFPA (191 aa). Cys307, Cys310, Cys324, Cys329, His334, Cys337, Cys359, and Cys362 together coordinate Zn(2+). An RING-type; degenerate zinc finger spans residues 307–363; sequence CGICYAYQLDGTIPDQVCDNSQCGQPFHQICLYEWLRGLLTSRQSFNIIFGECPYCS.

Interacts with GGN. Belongs to the multisubunit FA complex composed of FANCA, FANCB, FANCC, FANCE, FANCF, FANCG, FANCL/PHF9 and FANCM. The complex is not found in FA patients. In complex with FANCF, FANCA and FANCG, but not with FANCC, nor FANCE, interacts with HES1; this interaction may be essential for the stability and nuclear localization of FA core complex proteins. Interacts with FANCI. Directly interacts (via the RING-type zinc finger) with UBE2T and UBE2W. The RING-type zinc finger domain is monoubiquitinated in the presence of UBE2T and UBE2W.

It localises to the cytoplasm. The protein resides in the nucleus. The enzyme catalyses S-ubiquitinyl-[E2 ubiquitin-conjugating enzyme]-L-cysteine + [acceptor protein]-L-lysine = [E2 ubiquitin-conjugating enzyme]-L-cysteine + N(6)-ubiquitinyl-[acceptor protein]-L-lysine.. The protein operates within protein modification; protein ubiquitination. Its function is as follows. Ubiquitin ligase protein that mediates monoubiquitination of FANCD2 in the presence of UBE2T, a key step in the DNA damage pathway. Also mediates monoubiquitination of FANCI. May stimulate the ubiquitin release from UBE2W. May be required for proper primordial germ cell proliferation in the embryonic stage, whereas it is probably not needed for spermatogonial proliferation after birth. In Homo sapiens (Human), this protein is E3 ubiquitin-protein ligase FANCL (FANCL).